Reading from the N-terminus, the 109-residue chain is Spermidine export protein MdtI (109 aa).

At 1–5 (MAQFE) the chain is on the periplasmic side. A helical transmembrane segment spans residues 6-26 (WVHAAWLALAIVLEIIANVFL). Residues 27–35 (KFSDGFRRK) lie on the Cytoplasmic side of the membrane. A helical membrane pass occupies residues 36–56 (IFGLLSLAAVLAAFSALSQAV). At 57 to 63 (KGIDLSV) the chain is on the periplasmic side. Residues 64–84 (AYALWGGFGIAATLAAGWILF) form a helical membrane-spanning segment. The Cytoplasmic segment spans residues 85–87 (GQR). The chain crosses the membrane as a helical span at residues 88 to 108 (LNRKGWIGLVLLLAGMIMVKL). Residue A109 is a topological domain, periplasmic.

The protein belongs to the drug/metabolite transporter (DMT) superfamily. Small multidrug resistance (SMR) (TC 2.A.7.1) family. MdtI subfamily. In terms of assembly, forms a complex with MdtJ.

It localises to the cell inner membrane. In terms of biological role, catalyzes the excretion of spermidine. This Escherichia coli O6:H1 (strain CFT073 / ATCC 700928 / UPEC) protein is Spermidine export protein MdtI (mdtI).